Here is a 293-residue protein sequence, read N- to C-terminus: 4-hydroxy-tetrahydrodipicolinate synthase (293 aa).

Pyruvate is bound at residue T47. The Proton donor/acceptor role is filled by Y136. Catalysis depends on K164, which acts as the Schiff-base intermediate with substrate. I206 contributes to the pyruvate binding site.

It belongs to the DapA family. As to quaternary structure, homotetramer; dimer of dimers.

The protein resides in the cytoplasm. The enzyme catalyses L-aspartate 4-semialdehyde + pyruvate = (2S,4S)-4-hydroxy-2,3,4,5-tetrahydrodipicolinate + H2O + H(+). It functions in the pathway amino-acid biosynthesis; L-lysine biosynthesis via DAP pathway; (S)-tetrahydrodipicolinate from L-aspartate: step 3/4. Its function is as follows. Catalyzes the condensation of (S)-aspartate-beta-semialdehyde [(S)-ASA] and pyruvate to 4-hydroxy-tetrahydrodipicolinate (HTPA). This Listeria welshimeri serovar 6b (strain ATCC 35897 / DSM 20650 / CCUG 15529 / CIP 8149 / NCTC 11857 / SLCC 5334 / V8) protein is 4-hydroxy-tetrahydrodipicolinate synthase.